We begin with the raw amino-acid sequence, 231 residues long: Lipoprotein-releasing system ATP-binding protein LolD (231 aa).

Positions 6 to 230 (LSCKNVSKKY…DGELELVINS (225 aa)) constitute an ABC transporter domain. 42-49 (GLSGSGKT) lines the ATP pocket.

Belongs to the ABC transporter superfamily. Lipoprotein translocase (TC 3.A.1.125) family. In terms of assembly, the complex is composed of two ATP-binding proteins (LolD) and two transmembrane proteins (LolC and LolE).

The protein resides in the cell inner membrane. In terms of biological role, part of the ABC transporter complex LolCDE involved in the translocation of mature outer membrane-directed lipoproteins, from the inner membrane to the periplasmic chaperone, LolA. Responsible for the formation of the LolA-lipoprotein complex in an ATP-dependent manner. The protein is Lipoprotein-releasing system ATP-binding protein LolD of Francisella tularensis subsp. holarctica (strain OSU18).